The sequence spans 1505 residues: Probable serine/threonine-protein kinase DDB_G0280133 (1505 aa).

3 consecutive PAS domains span residues 2–72, 108–178, and 215–284; these read NTHN…FETG, RMFI…YHGG, and DMFK…TDSH. Disordered regions lie at residues 282-348 and 398-533; these read DSHD…FNHS and RVYG…ESSY. Composition is skewed to low complexity over residues 289-314 and 328-344; these read QQQQ…TTST and SSPP…TPTT. Basic and acidic residues-rich tracts occupy residues 398-407 and 415-430; these read RVYGKDKDKN and ENKD…ESKE. The span at 431-443 shows a compositional bias: basic residues; that stretch reads HRHSKEKKKRKKD. Positions 448 to 468 are enriched in low complexity; the sequence is NNNNNNNNNNNNNNEQTSDSS. Over residues 479-489 the composition is skewed to basic residues; the sequence is SKKKRSSKKKS. A compositionally biased stretch (low complexity) spans 515-532; it reads SSNSSSNSSHSNAPHESS. A Protein kinase domain is found at 542–805; that stretch reads YTLGKTLGRG…IMNVLNHPWL (264 aa). ATP is bound by residues 548–556 and K571; that span reads LGRGNYGVV. Catalysis depends on D684, which acts as the Proton acceptor. Over residues 855 to 960 the composition is skewed to low complexity; that stretch reads NILNNNNNNN…NNTNSIINNN (106 aa). Disordered stretches follow at residues 855–1048, 1072–1091, and 1181–1358; these read NILN…SHQQ, QPNQ…QLQQ, and QQQQ…DEEN. The stretch at 903 to 939 forms a coiled coil; sequence NNNNNINNNINNNNNVNNNVNNNKNNNNNNNNNSNNN. The span at 961 to 974 shows a compositional bias: polar residues; sequence LYNQSLSPQNNNIY. Composition is skewed to low complexity over residues 975 to 1013 and 1022 to 1048; these read QHSP…QQQH and QQHQ…SHQQ. A compositionally biased stretch (polar residues) spans 1072–1082; sequence QPNQQVSFDTN. Residues 1125–1189 adopt a coiled-coil conformation; that stretch reads IQQIQQLQQQ…QQQQQQQQND (65 aa). Basic and acidic residues predominate over residues 1202-1271; that stretch reads SKRDNSYNKR…NSRDNNRYNN (70 aa). The span at 1272–1282 shows a compositional bias: low complexity; it reads RDNNNNNNSNN. 2 stretches are compositionally biased toward basic and acidic residues: residues 1283-1301 and 1313-1326; these read NRER…DYGK and NKDK…KPDF. Residues 1331–1347 show a composition bias toward polar residues; sequence SLKNDSSSNYGTISSGR. Positions 1399 to 1463 constitute an FHA domain; the sequence is FLFGRNRDIA…NGTFLKGEKI (65 aa).

Belongs to the protein kinase superfamily. CAMK Ser/Thr protein kinase family. SNF1 subfamily.

It catalyses the reaction L-seryl-[protein] + ATP = O-phospho-L-seryl-[protein] + ADP + H(+). The catalysed reaction is L-threonyl-[protein] + ATP = O-phospho-L-threonyl-[protein] + ADP + H(+). The protein is Probable serine/threonine-protein kinase DDB_G0280133 of Dictyostelium discoideum (Social amoeba).